The sequence spans 733 residues: 1,4-alpha-glucan branching enzyme GlgB (733 aa).

D412 (nucleophile) is an active-site residue. The Proton donor role is filled by E467.

The protein belongs to the glycosyl hydrolase 13 family. GlgB subfamily. In terms of assembly, monomer.

The catalysed reaction is Transfers a segment of a (1-&gt;4)-alpha-D-glucan chain to a primary hydroxy group in a similar glucan chain.. It functions in the pathway glycan biosynthesis; glycogen biosynthesis. In terms of biological role, catalyzes the formation of the alpha-1,6-glucosidic linkages in glycogen by scission of a 1,4-alpha-linked oligosaccharide from growing alpha-1,4-glucan chains and the subsequent attachment of the oligosaccharide to the alpha-1,6 position. This Burkholderia vietnamiensis (strain G4 / LMG 22486) (Burkholderia cepacia (strain R1808)) protein is 1,4-alpha-glucan branching enzyme GlgB.